Reading from the N-terminus, the 301-residue chain is ATP synthase gamma chain (301 aa).

It belongs to the ATPase gamma chain family. F-type ATPases have 2 components, CF(1) - the catalytic core - and CF(0) - the membrane proton channel. CF(1) has five subunits: alpha(3), beta(3), gamma(1), delta(1), epsilon(1). CF(0) has three main subunits: a, b and c.

The protein resides in the cell inner membrane. In terms of biological role, produces ATP from ADP in the presence of a proton gradient across the membrane. The gamma chain is believed to be important in regulating ATPase activity and the flow of protons through the CF(0) complex. The chain is ATP synthase gamma chain from Bordetella avium (strain 197N).